Consider the following 329-residue polypeptide: tRNA(Ile)-lysidine synthase, chloroplastic (329 aa).

32–37 (SGGQDS) contacts ATP.

This sequence belongs to the tRNA(Ile)-lysidine synthase family.

It is found in the plastid. It localises to the chloroplast. It catalyses the reaction cytidine(34) in tRNA(Ile2) + L-lysine + ATP = lysidine(34) in tRNA(Ile2) + AMP + diphosphate + H(+). Its function is as follows. Ligates lysine onto the cytidine present at position 34 of the AUA codon-specific tRNA(Ile) that contains the anticodon CAU, in an ATP-dependent manner. Cytidine is converted to lysidine, thus changing the amino acid specificity of the tRNA from methionine to isoleucine. In Pyropia yezoensis (Susabi-nori), this protein is tRNA(Ile)-lysidine synthase, chloroplastic.